Reading from the N-terminus, the 468-residue chain is Protein wingless (468 aa).

An N-terminal signal peptide occupies residues 1 to 17; that stretch reads MDISYIFVICLMALCSG. The interval 83 to 106 is binds porcupine; sequence VKGANLAISECQHQFRNRRWNCST. Cysteines 93 and 104 form a disulfide. N-linked (GlcNAc...) asparagine glycosylation is found at N103 and N108. 4 disulfide bridges follow: C146-C154, C156-C185, C233-C247, and C235-C242. S239 carries the O-palmitoleoyl serine; by PORCN lipid modification. Residues 333-362 are disordered; that stretch reads ISKIHHPNMPSPNSLPQAGQRGGRNGRRQG. Disulfide bonds link C397/C428, C413/C423, C427/C467, C443/C458, C445/C455, and C450/C451. The N-linked (GlcNAc...) asparagine glycan is linked to N414.

This sequence belongs to the Wnt family. Monomer; folds by intramolecular disulfide bonds. Interacts with porcupine (por). Interacts with wls; in the Golgi. Interacts with en. Interacts with the proteoglycan Cow (heparan sulfate-bound form); this stabilizes wg and promotes its extracellular distribution. Interacts with peg; the interaction facilitates short-range diffusion of wg. Palmitoleoylated by porcupine. The lipid group functions as a sorting signal, targeting the ligand to polarized vesicles that transport wg to unique sites at the cell surface. Depalmitoleoylated by notum, leading to inhibit Wnt signaling pathway. Post-translationally, major form is glycosylated at 2 sites, glycosylation is stimulated by porcupine at the ER. Segmented expression in embryos. In embryonic tracheal cells, expression is in stripes flanking the tracheal placode.

Its subcellular location is the secreted. The protein resides in the synapse. It is found in the membrane. It localises to the extracellular space. The protein localises to the extracellular matrix. Functionally, binds as a ligand to a family of frizzled seven-transmembrane receptors and acts through a cascade of genes on the nucleus. Segment polarity protein. May be a growth factor. Acts on neighboring cells to regulate at least one gene, the homeobox segmentation gene engrailed. Wg signal represses arm phosphorylation. Wg signaling operates by inactivating the sgg repression of engrailed autoactivation. Wg and Wnt2 have a role in the developing trachea and together are responsible for all dorsal trunk formation. Wg also acts in the developing epidermis. Acts as a morphogen, and diffuses long distances despite its lipidation. Lipophorin is required for diffusion, probably by acting as vehicle for its movement, explaining how it can spread over long distances despite its lipidation. In non-neuronal cells, wls directs wg secretion via clathrin-mediated endocytosis and the retromer complex (a conserved protein complex consisting of Vps26 and Vps35) to sustain a wls traffic loop encompassing the Golgi, the cell surface, an endocytic compartment and a retrograde route leading back to the Golgi. In neuronal cells (the larval motorneuron NMJ), wg signal moves across the synapse through the release of wls-containing exosome-like vesicles. In Drosophila melanogaster (Fruit fly), this protein is Protein wingless (wg).